The primary structure comprises 237 residues: LexA repressor (237 aa).

The segment at residues 26 to 46 (FDEMKEALDLRSKSGIHRLIT) is a DNA-binding region (H-T-H motif). The interval 84-110 (GFSPSVIEGGAQPKPSSRDLAPARSSG) is disordered. Residues Ser158 and Lys196 each act as for autocatalytic cleavage activity in the active site.

It belongs to the peptidase S24 family. As to quaternary structure, homodimer.

The catalysed reaction is Hydrolysis of Ala-|-Gly bond in repressor LexA.. In terms of biological role, represses a number of genes involved in the response to DNA damage (SOS response), including recA and lexA. In the presence of single-stranded DNA, RecA interacts with LexA causing an autocatalytic cleavage which disrupts the DNA-binding part of LexA, leading to derepression of the SOS regulon and eventually DNA repair. The protein is LexA repressor of Parvibaculum lavamentivorans (strain DS-1 / DSM 13023 / NCIMB 13966).